Consider the following 317-residue polypeptide: Pseudouridine-5'-phosphate glycosidase 1 (317 aa).

E40 (proton donor) is an active-site residue. Positions 101 and 121 each coordinate substrate. D153 is a binding site for Mn(2+). A substrate-binding site is contributed by 155–157 (SAD). The active-site Nucleophile is K174.

Belongs to the pseudouridine-5'-phosphate glycosidase family. In terms of assembly, homotrimer. Mn(2+) serves as cofactor.

It carries out the reaction D-ribose 5-phosphate + uracil = psi-UMP + H2O. In terms of biological role, catalyzes the reversible cleavage of pseudouridine 5'-phosphate (PsiMP) to ribose 5-phosphate and uracil. Functions biologically in the cleavage direction, as part of a pseudouridine degradation pathway. In Rhizobium johnstonii (strain DSM 114642 / LMG 32736 / 3841) (Rhizobium leguminosarum bv. viciae), this protein is Pseudouridine-5'-phosphate glycosidase 1.